The following is a 481-amino-acid chain: RAC-beta serine/threonine-protein kinase (481 aa).

Met1 is subject to N-acetylmethionine. Residues 5-108 (SVIKEGWLHK…WMRAIQMVAN (104 aa)) form the PH domain. Ser34 carries the post-translational modification Phosphoserine. A disulfide bond links Cys60 and Cys77. At Ser126 the chain carries Phosphoserine. O-linked (GlcNAc) serine glycans are attached at residues Ser128 and Ser131. The region spanning 152-409 (FDYLKLLGKG…AKEVMEHRFF (258 aa)) is the Protein kinase domain. ATP-binding positions include 158-166 (LGKGTFGKV) and Lys181. Asp275 functions as the Proton acceptor in the catalytic mechanism. Mn(2+) contacts are provided by Asn280 and Asp293. The cysteines at positions 297 and 311 are disulfide-linked. Residue Thr306 is glycosylated (O-linked (GlcNAc) threonine). Thr309 carries the phosphothreonine; by PDPK1 modification. The O-linked (GlcNAc) threonine glycan is linked to Thr313. The region spanning 410 to 481 (LSINWQDVVQ…QFSYSASIRE (72 aa)) is the AGC-kinase C-terminal domain. Phosphoserine is present on Ser447. Position 451 is a phosphothreonine (Thr451). Residues Ser474 and Ser478 each carry the phosphoserine modification. Ser474 carries an O-linked (GlcNAc) serine; alternate glycan.

The protein belongs to the protein kinase superfamily. AGC Ser/Thr protein kinase family. RAC subfamily. As to quaternary structure, interacts with BTBD10. Interacts with KCTD20. Interacts (via PH domain) with MTCP1, TCL1A and TCL1B; this interaction may facilitate AKT2 oligomerization and phosphorylation, hence increasing kinase activity. Interacts with PHB2; this interaction may be important for myogenic differentiation. Interacts (when phosphorylated) with CLIP3/ClipR-59; this interaction promotes AKT2 recruitment to the plasma membrane. Interacts with WDFY2/ProF (via WD repeats 1-3). Post-translationally, phosphorylation on Thr-309 and Ser-474 is required for full activity. Phosphorylation of the activation loop at Thr-309 by PDPK1/PDK1 is a prerequisite for full activation. Phosphorylated and activated by PDPK1/PDK1 in the presence of phosphatidylinositol 3,4,5-trisphosphate. Phosphorylation by mTORC2 in response to growth factors plays a key role in AKT1 activation: mTORC2 phosphorylates different sites depending on the context, such as Ser-474 or Ser-478, thereby facilitating subsequent phosphorylation of the activation loop by PDPK1/PDK1. Ubiquitinated; undergoes both 'Lys-48'- and 'Lys-63'-linked polyubiquitination. TRAF6 catalyzes 'Lys-63'-linked AKT2 ubiquitination; this modification may be important for AKT2 recruitment to the plasma membrane and for AKT2 activating phosphorylation. When phosphorylated, undergoes 'Lys-48'-polyubiquitination catalyzed by TTC3 in the nucleus, leading to its degradation by the proteasome. In terms of processing, O-GlcNAcylation at Thr-306 and Thr-313 inhibits activating phosphorylation at Thr-309 via the disruption of the interaction between AKT and PDPK1/PDK1. Widely expressed. Expressed in myoblasts.

The protein localises to the cytoplasm. The protein resides in the nucleus. It is found in the cell membrane. It localises to the early endosome. It catalyses the reaction L-seryl-[protein] + ATP = O-phospho-L-seryl-[protein] + ADP + H(+). The enzyme catalyses L-threonyl-[protein] + ATP = O-phospho-L-threonyl-[protein] + ADP + H(+). With respect to regulation, phosphorylation at Thr-309 (in the kinase domain) and Ser-474 (in the C-terminal regulatory region) is required for full activation. In adipocytes and hepatocytes, the activation is induced by insulin. Aminofurazans, such as 4-[2-(4-amino-2,5-dihydro-1,2,5-oxadiazol-3-yl)-6-{[(1S)-3-amino-1-phenylpropyl]oxy}-1-ethyl-1H-imidazo[4,5-c]pyridin-4-yl]-2-methylbut-3-yn-2-ol (compound 32), are potent AKT2 inhibitors. AKT2 phosphorylation of PKP1 is induced by insulin. Its function is as follows. Serine/threonine kinase closely related to AKT1 and AKT3. All 3 enzymes, AKT1, AKT2 and AKT3, are collectively known as AKT kinase. AKT regulates many processes including metabolism, proliferation, cell survival, growth and angiogenesis, through the phosphorylation of a range of downstream substrates. Over 100 substrates have been reported so far, although for most of them, the precise AKT kinase catalyzing the reaction was not specified. AKT regulates glucose uptake by mediating insulin-induced translocation of the SLC2A4/GLUT4 glucose transporter to the cell surface. Phosphorylation of PTPN1 at 'Ser-50' negatively modulates its phosphatase activity preventing dephosphorylation of the insulin receptor and the attenuation of insulin signaling. Phosphorylation of TBC1D4 triggers the binding of this effector to inhibitory 14-3-3 proteins, which is required for insulin-stimulated glucose transport. AKT also regulates the storage of glucose in the form of glycogen by phosphorylating GSK3A at 'Ser-21' and GSK3B at 'Ser-9', resulting in inhibition of its kinase activity. Phosphorylation of GSK3 isoforms by AKT is also thought to be one mechanism by which cell proliferation is driven. AKT also regulates cell survival via the phosphorylation of MAP3K5 (apoptosis signal-related kinase). Phosphorylation of 'Ser-83' decreases MAP3K5 kinase activity stimulated by oxidative stress and thereby prevents apoptosis. AKT mediates insulin-stimulated protein synthesis by phosphorylating TSC2 at 'Ser-939' and 'Thr-1462', thereby activating mTORC1 signaling and leading to both phosphorylation of 4E-BP1 and in activation of RPS6KB1. AKT is involved in the phosphorylation of members of the FOXO factors (Forkhead family of transcription factors), leading to binding of 14-3-3 proteins and cytoplasmic localization. In particular, FOXO1 is phosphorylated at 'Thr-24', 'Ser-256' and 'Ser-319'. FOXO3 and FOXO4 are phosphorylated on equivalent sites. AKT has an important role in the regulation of NF-kappa-B-dependent gene transcription and positively regulates the activity of CREB1 (cyclic AMP (cAMP)-response element binding protein). The phosphorylation of CREB1 induces the binding of accessory proteins that are necessary for the transcription of pro-survival genes such as BCL2 and MCL1. AKT phosphorylates 'Ser-454' on ATP citrate lyase (ACLY), thereby potentially regulating ACLY activity and fatty acid synthesis. Activates the 3B isoform of cyclic nucleotide phosphodiesterase (PDE3B) via phosphorylation of 'Ser-273', resulting in reduced cyclic AMP levels and inhibition of lipolysis. Phosphorylates PIKFYVE on 'Ser-318', which results in increased PI(3)P-5 activity. The Rho GTPase-activating protein DLC1 is another substrate and its phosphorylation is implicated in the regulation cell proliferation and cell growth. AKT plays a role as key modulator of the AKT-mTOR signaling pathway controlling the tempo of the process of newborn neurons integration during adult neurogenesis, including correct neuron positioning, dendritic development and synapse formation. Signals downstream of phosphatidylinositol 3-kinase (PI(3)K) to mediate the effects of various growth factors such as platelet-derived growth factor (PDGF), epidermal growth factor (EGF), insulin and insulin-like growth factor 1 (IGF1). AKT mediates the antiapoptotic effects of IGF1. Essential for the SPATA13-mediated regulation of cell migration and adhesion assembly and disassembly. May be involved in the regulation of the placental development. In response to lysophosphatidic acid stimulation, inhibits the ciliogenesis cascade. In this context, phosphorylates WDR44, hence stabilizing its interaction with Rab11 and preventing the formation of the ciliogenic Rab11-FIP3-RAB3IP complex. Also phosphorylates RAB3IP/Rabin8, thus may affect RAB3IP guanine nucleotide exchange factor (GEF) activity toward Rab8, which is important for cilia growth. Phosphorylates PKP1, facilitating its interaction with YWHAG and translocation to the nucleus, ultimately resulting in a reduction in keratinocyte intercellular adhesion. Phosphorylation of PKP1 increases PKP1 protein stability, translocation to the cytoplasm away from desmosome plaques and PKP1-driven cap-dependent translation. In terms of biological role, several AKT2-specific substrates have been identified, including ANKRD2, C2CD5, CLK2 and PITX2. May play a role in myoblast differentiation. In this context, may act through PITX2 phosphorylation. Unphosphorylated PITX2 associates with an ELAVL1/HuR-containing complex, which stabilizes CCND1 cyclin mRNA, ensuring cell proliferation. Phosphorylation by AKT2 impairs this association, leading to CCND1 mRNA destabilization and progression towards differentiation. Also involved in the negative regulation of myogenesis in response to stress conditions. In this context, acts by phosphorylating ANKRD2. May also be a key regulator of glucose uptake. Regulates insulin-stimulated glucose transport by the increase of glucose transporter GLUT4 translocation from intracellular stores to the plasma membrane. In this context, acts by phosphorylating C2CD5/CDP138 on 'Ser-197' in insulin-stimulated adipocytes. Through the phosphorylation of CLK2 on 'Thr-343', involved in insulin-regulated suppression of hepatic gluconeogenesis. In Homo sapiens (Human), this protein is RAC-beta serine/threonine-protein kinase.